A 220-amino-acid polypeptide reads, in one-letter code: Large ribosomal subunit protein uL3 (220 aa).

The protein belongs to the universal ribosomal protein uL3 family. In terms of assembly, part of the 50S ribosomal subunit. Forms a cluster with proteins L14 and L19.

Functionally, one of the primary rRNA binding proteins, it binds directly near the 3'-end of the 23S rRNA, where it nucleates assembly of the 50S subunit. This chain is Large ribosomal subunit protein uL3, found in Staphylococcus carnosus (strain TM300).